The primary structure comprises 72 residues: Large ribosomal subunit protein uL29 (72 aa).

The protein belongs to the universal ribosomal protein uL29 family.

The protein is Large ribosomal subunit protein uL29 of Caldicellulosiruptor saccharolyticus (strain ATCC 43494 / DSM 8903 / Tp8T 6331).